The primary structure comprises 230 residues: Orotate phosphoribosyltransferase (230 aa).

5-phospho-alpha-D-ribose 1-diphosphate-binding positions include Arg107, Lys108, Lys111, His113, and 133 to 141 (EDLTTAGGS). Thr137 lines the orotate pocket.

It belongs to the purine/pyrimidine phosphoribosyltransferase family. PyrE subfamily. As to quaternary structure, homodimer. It depends on Mg(2+) as a cofactor.

It carries out the reaction orotidine 5'-phosphate + diphosphate = orotate + 5-phospho-alpha-D-ribose 1-diphosphate. It functions in the pathway pyrimidine metabolism; UMP biosynthesis via de novo pathway; UMP from orotate: step 1/2. In terms of biological role, catalyzes the transfer of a ribosyl phosphate group from 5-phosphoribose 1-diphosphate to orotate, leading to the formation of orotidine monophosphate (OMP). In Allorhizobium ampelinum (strain ATCC BAA-846 / DSM 112012 / S4) (Agrobacterium vitis (strain S4)), this protein is Orotate phosphoribosyltransferase.